The chain runs to 123 residues: Small ribosomal subunit protein uS12cz/uS12cy (123 aa).

It belongs to the universal ribosomal protein uS12 family. As to quaternary structure, part of the 30S ribosomal subunit.

Its subcellular location is the plastid. The protein resides in the chloroplast. In terms of biological role, with S4 and S5 plays an important role in translational accuracy. Located at the interface of the 30S and 50S subunits. This chain is Small ribosomal subunit protein uS12cz/uS12cy (rps12-A), found in Gossypium hirsutum (Upland cotton).